A 357-amino-acid chain; its full sequence is Dehydrogenase FUB6 (357 aa).

It belongs to the zinc-containing alcohol dehydrogenase family. Quinone oxidoreductase subfamily.

Its pathway is mycotoxin biosynthesis. In terms of biological role, dehydrogenase; part of the gene cluster that mediates the biosynthesis of fusaric acid, a mycotoxin with low to moderate toxicity to animals and humans, but with high phytotoxic properties. L-aspartate is suggested as fusaric acid amino acid precursor that is activated and further processed to O-acetyl-L-homoserine by cluster enzymes aspartate kinase FUB3 and homoserine O-acetyltransferase FUB5, as well as enzymes of the primary metabolism. The polyketide synthase (PKS) FUB1 generates the triketide trans-2-hexenal which is presumptively released by the hydrolase FUB4 and linked to the NRPS-bound amino acid precursor by NAD(P)-dependent dehydrogenase FUB6. FUB1, FUB4, and the non-canonical NRPS Fub8 may form an enzyme complex. Further processing of the NRPS-bound intermediate might be carried out by FUB6 and the O-acetylhomoserine FUB7, enabling a spontaneous electrocyclization to close the carbon backbone of fusaric acid. Dihydrofusaric acid is likely to be released via reduction by the thioester reductase (TR) domain of FUB8 whereupon the final oxidation to fusaric acid may (also) be performed by the FMN-dependent dehydrogenase FUB9. This Gibberella moniliformis (strain M3125 / FGSC 7600) (Maize ear and stalk rot fungus) protein is Dehydrogenase FUB6.